A 243-amino-acid chain; its full sequence is DNA repair protein RecO (243 aa).

It belongs to the RecO family.

Its function is as follows. Involved in DNA repair and RecF pathway recombination. The sequence is that of DNA repair protein RecO from Beutenbergia cavernae (strain ATCC BAA-8 / DSM 12333 / CCUG 43141 / JCM 11478 / NBRC 16432 / NCIMB 13614 / HKI 0122).